The chain runs to 373 residues: Ribosomal protein uL16 3-hydroxylase (373 aa).

The region spanning 92 to 219 (PTAALMRPFR…LISGFADYVL (128 aa)) is the JmjC domain. Residues serine 114, 125–127 (HLD), arginine 140, and histidine 187 each bind substrate. Fe cation-binding residues include histidine 125 and aspartate 127. A Fe cation-binding site is contributed by histidine 187.

It belongs to the ROX family. RoxA/YcfD subfamily. As to quaternary structure, homodimer. Fe(2+) is required as a cofactor.

It catalyses the reaction L-arginyl-[ribosomal protein uL16] + 2-oxoglutarate + O2 = (3R)-3-hydroxy-L-arginyl-[ribosomal protein uL16] + succinate + CO2. Functionally, growth-regulating oxygenase that catalyzes the hydroxylation of ribosomal protein uL16 on 'Arg-81'. The chain is Ribosomal protein uL16 3-hydroxylase (roxA) from Escherichia coli (strain K12).